Consider the following 85-residue polypeptide: Acyl carrier protein (85 aa).

The 76-residue stretch at 4–79 folds into the Carrier domain; the sequence is DELFEKVKEI…NAVNLLSEKL (76 aa). An O-(pantetheine 4'-phosphoryl)serine modification is found at S39.

The protein belongs to the acyl carrier protein (ACP) family. In terms of processing, 4'-phosphopantetheine is transferred from CoA to a specific serine of apo-ACP by AcpS. This modification is essential for activity because fatty acids are bound in thioester linkage to the sulfhydryl of the prosthetic group.

Its subcellular location is the cytoplasm. The protein operates within lipid metabolism; fatty acid biosynthesis. Functionally, carrier of the growing fatty acid chain in fatty acid biosynthesis. This chain is Acyl carrier protein, found in Petrotoga mobilis (strain DSM 10674 / SJ95).